The chain runs to 50 residues: Basic phospholipase A2 Bmaj-9 (50 aa).

Ca(2+) is bound by residues Y27, G29, and G31. A disulfide bond links C28 and C45. Residue H48 is part of the active site. D49 is a Ca(2+) binding site.

It belongs to the phospholipase A2 family. Group II subfamily. D49 sub-subfamily. It depends on Ca(2+) as a cofactor. Expressed by the venom gland.

The protein localises to the secreted. The catalysed reaction is a 1,2-diacyl-sn-glycero-3-phosphocholine + H2O = a 1-acyl-sn-glycero-3-phosphocholine + a fatty acid + H(+). In terms of biological role, snake venom phospholipase A2 (PLA2) that causes irreversible neuromuscular blockade in chick biventer cervicis muscle preparations. The neuromuscular blockade is mediated by inhibitory action at the presynaptic motor nerve endings. PLA2 catalyzes the calcium-dependent hydrolysis of the 2-acyl groups in 3-sn-phosphoglycerides. The polypeptide is Basic phospholipase A2 Bmaj-9 (Bothrops marajoensis (Marajo lancehead)).